A 197-amino-acid polypeptide reads, in one-letter code: MTTPSKISAVAEITNDFKESNAAVLTEYRGLTVAQLKELRVALGQDTKFSVVKNTLSAIAAKEAGVEAFNDQLAGPTAIAFIKGDAVAAAKSLTDFAKANKQLVIKTGVFEGKALDAAGVAALAALESRELQLARVAGVLKAPASAAARIIDALRLKLEEEGGASAPAAEEAPAAEEAAAEEVAAPAEAAEAATEEN.

The interval 162–197 is disordered; it reads GGASAPAAEEAPAAEEAAAEEVAAPAEAAEAATEEN. The segment covering 163-197 has biased composition (low complexity); the sequence is GASAPAAEEAPAAEEAAAEEVAAPAEAAEAATEEN.

This sequence belongs to the universal ribosomal protein uL10 family. Part of the ribosomal stalk of the 50S ribosomal subunit. The N-terminus interacts with L11 and the large rRNA to form the base of the stalk. The C-terminus forms an elongated spine to which L12 dimers bind in a sequential fashion forming a multimeric L10(L12)X complex.

Its function is as follows. Forms part of the ribosomal stalk, playing a central role in the interaction of the ribosome with GTP-bound translation factors. This chain is Large ribosomal subunit protein uL10, found in Paenarthrobacter aurescens (strain TC1).